Here is an 895-residue protein sequence, read N- to C-terminus: DNA double-strand break repair Rad50 ATPase (895 aa).

ATP is bound by residues 32–38 (NGAGKSS) and Gln-137. Residues 183–253 (SDYDYLKNEL…LNAQLETIKK (71 aa)) are a coiled coil. The Zinc-hook domain occupies 411–507 (RAEINSSLMQ…ERKHQKKLLD (97 aa)). Residues Cys-455 and Cys-458 each coordinate Zn(2+). 2 coiled-coil regions span residues 464–510 (TEKS…DRIN) and 618–647 (ENSL…AMDE).

This sequence belongs to the SMC family. RAD50 subfamily. Homodimer. Forms a heterotetramer composed of two Mre11 subunits and two Rad50 subunits. The cofactor is Zn(2+).

Its function is as follows. Part of the Rad50/Mre11 complex, which is involved in the early steps of DNA double-strand break (DSB) repair. The complex may facilitate opening of the processed DNA ends to aid in the recruitment of HerA and NurA. Rad50 controls the balance between DNA end bridging and DNA resection via ATP-dependent structural rearrangements of the Rad50/Mre11 complex. The polypeptide is DNA double-strand break repair Rad50 ATPase (Thermoplasma volcanium (strain ATCC 51530 / DSM 4299 / JCM 9571 / NBRC 15438 / GSS1)).